The following is a 189-amino-acid chain: UPF0149 protein VF_2102 (189 aa).

It belongs to the UPF0149 family.

The chain is UPF0149 protein VF_2102 from Aliivibrio fischeri (strain ATCC 700601 / ES114) (Vibrio fischeri).